The chain runs to 94 residues: Integration host factor subunit beta (94 aa).

It belongs to the bacterial histone-like protein family. In terms of assembly, heterodimer of an alpha and a beta chain.

Functionally, this protein is one of the two subunits of integration host factor, a specific DNA-binding protein that functions in genetic recombination as well as in transcriptional and translational control. The polypeptide is Integration host factor subunit beta (Azorhizobium caulinodans (strain ATCC 43989 / DSM 5975 / JCM 20966 / LMG 6465 / NBRC 14845 / NCIMB 13405 / ORS 571)).